The following is a 479-amino-acid chain: Monodictyphenone cluster transcriptional coactivator mdpA (479 aa).

One can recognise an HTH iclR-type domain in the interval 77-147; it reads LAVQNQLLAC…DPGQVAHSAL (71 aa). Residues 107 to 126 constitute a DNA-binding region (H-T-H motif); it reads IKDVAELAGVPETHLSRIIR. Disordered stretches follow at residues 281-305 and 314-333; these read GPTAWSPAHPNPIRPPTPGGSHKHD and TASTTPASSHNHTHTHTTNS. Residues 289–298 show a composition bias toward pro residues; that stretch reads HPNPIRPPTP. Residues 314–323 are compositionally biased toward low complexity; the sequence is TASTTPASSH.

Its subcellular location is the nucleus. Its function is as follows. Transcriptional coactivator; part of the gene cluster that mediates the biosynthesis of monodictyphenone, a prenyl xanthone derivative. With mdpE, coregulates the production of monodictyphenone. The sequence is that of Monodictyphenone cluster transcriptional coactivator mdpA from Emericella nidulans (strain FGSC A4 / ATCC 38163 / CBS 112.46 / NRRL 194 / M139) (Aspergillus nidulans).